Consider the following 276-residue polypeptide: Formamidopyrimidine-DNA glycosylase (276 aa).

The Schiff-base intermediate with DNA role is filled by Pro2. The active-site Proton donor is the Glu3. Lys58 serves as the catalytic Proton donor; for beta-elimination activity. Positions 94, 112, and 157 each coordinate DNA. Residues 242 to 276 (FVYDRAGLPCRVCGTPIKQIVQGQRSTYFCPTCQR) form an FPG-type zinc finger. Arg266 acts as the Proton donor; for delta-elimination activity in catalysis.

This sequence belongs to the FPG family. In terms of assembly, monomer. Requires Zn(2+) as cofactor.

It catalyses the reaction Hydrolysis of DNA containing ring-opened 7-methylguanine residues, releasing 2,6-diamino-4-hydroxy-5-(N-methyl)formamidopyrimidine.. It carries out the reaction 2'-deoxyribonucleotide-(2'-deoxyribose 5'-phosphate)-2'-deoxyribonucleotide-DNA = a 3'-end 2'-deoxyribonucleotide-(2,3-dehydro-2,3-deoxyribose 5'-phosphate)-DNA + a 5'-end 5'-phospho-2'-deoxyribonucleoside-DNA + H(+). In terms of biological role, involved in base excision repair of DNA damaged by oxidation or by mutagenic agents. Acts as a DNA glycosylase that recognizes and removes damaged bases. Has a preference for oxidized purines, such as 7,8-dihydro-8-oxoguanine (8-oxoG). Has AP (apurinic/apyrimidinic) lyase activity and introduces nicks in the DNA strand. Cleaves the DNA backbone by beta-delta elimination to generate a single-strand break at the site of the removed base with both 3'- and 5'-phosphates. This Paraburkholderia xenovorans (strain LB400) protein is Formamidopyrimidine-DNA glycosylase.